The primary structure comprises 361 residues: Peptide chain release factor 1 (361 aa).

An N5-methylglutamine modification is found at Gln-237.

It belongs to the prokaryotic/mitochondrial release factor family. Methylated by PrmC. Methylation increases the termination efficiency of RF1.

The protein resides in the cytoplasm. In terms of biological role, peptide chain release factor 1 directs the termination of translation in response to the peptide chain termination codons UAG and UAA. The chain is Peptide chain release factor 1 from Chromohalobacter salexigens (strain ATCC BAA-138 / DSM 3043 / CIP 106854 / NCIMB 13768 / 1H11).